The sequence spans 448 residues: UPF0210 protein Pars_1033 (448 aa).

It belongs to the UPF0210 family.

The sequence is that of UPF0210 protein Pars_1033 from Pyrobaculum arsenaticum (strain DSM 13514 / JCM 11321 / PZ6).